Reading from the N-terminus, the 329-residue chain is Ethylene-responsive transcription factor ERF117 (329 aa).

2 disordered regions span residues 25–51 (DATD…KPPK) and 71–90 (NSTG…FKGV). Positions 71 to 86 (NSTGNKAAGNRKTSSG) are enriched in polar residues. The segment at residues 86–143 (GFKGVRRRPWGKFAAEIRNPFEKKRKWLGTFPTEEEAAEAYQKSKREFDERLGLVKQE) is a DNA-binding region (AP2/ERF).

Belongs to the AP2/ERF transcription factor family. ERF subfamily.

It is found in the nucleus. In terms of biological role, probably acts as a transcriptional activator. Binds to the GCC-box pathogenesis-related promoter element. May be involved in the regulation of gene expression by stress factors and by components of stress signal transduction pathways. This Arabidopsis thaliana (Mouse-ear cress) protein is Ethylene-responsive transcription factor ERF117 (ERF117).